We begin with the raw amino-acid sequence, 99 residues long: MRIGVVGDSDVAVGFRLAGLTDVYEVKSPEQASKAIEELDNNAEIGLIITTERIGEGIRETIANAKKVIVEVPDKNGPIVREKDPVKILVRNAVGIDIK.

Belongs to the V-ATPase F subunit family. Has multiple subunits with at least A(3), B(3), C, D, E, F, H, I and proteolipid K(x).

The protein localises to the cell membrane. In terms of biological role, component of the A-type ATP synthase that produces ATP from ADP in the presence of a proton gradient across the membrane. The sequence is that of A-type ATP synthase subunit F from Methanococcus vannielii (strain ATCC 35089 / DSM 1224 / JCM 13029 / OCM 148 / SB).